A 556-amino-acid chain; its full sequence is Membrane protein insertase YidC (556 aa).

The next 5 membrane-spanning stretches (helical) occupy residues 6-26 (IVLY…WQID), 332-352 (LDLT…FSLM), 358-378 (VVGN…LAFY), 428-448 (LGGC…YWVL), and 501-521 (VMMF…SGLV).

The protein belongs to the OXA1/ALB3/YidC family. Type 1 subfamily. Interacts with the Sec translocase complex via SecD. Specifically interacts with transmembrane segments of nascent integral membrane proteins during membrane integration.

It localises to the cell inner membrane. Required for the insertion and/or proper folding and/or complex formation of integral membrane proteins into the membrane. Involved in integration of membrane proteins that insert both dependently and independently of the Sec translocase complex, as well as at least some lipoproteins. Aids folding of multispanning membrane proteins. The sequence is that of Membrane protein insertase YidC from Legionella pneumophila (strain Corby).